The chain runs to 130 residues: Small ribosomal subunit protein uS11 (130 aa).

Belongs to the universal ribosomal protein uS11 family. As to quaternary structure, part of the 30S ribosomal subunit. Interacts with proteins S7 and S18. Binds to IF-3.

Located on the platform of the 30S subunit, it bridges several disparate RNA helices of the 16S rRNA. Forms part of the Shine-Dalgarno cleft in the 70S ribosome. The polypeptide is Small ribosomal subunit protein uS11 (Sulfurimonas denitrificans (strain ATCC 33889 / DSM 1251) (Thiomicrospira denitrificans (strain ATCC 33889 / DSM 1251))).